The following is a 150-amino-acid chain: MQVILLEKVVNLGNLGEVVKVKDGYARNFLIPQRKARRATAAAVAEFEVKRAELEKIAAEKLAASQAQGEKLTGQTVQITQKSGVDGRLFGSVTNSDIAEALTKQGFAVEKAQVRLPTGPLKVAGDHVVAVALHTDVVVDVTITVIGDHA.

It belongs to the bacterial ribosomal protein bL9 family.

Functionally, binds to the 23S rRNA. This is Large ribosomal subunit protein bL9 from Janthinobacterium sp. (strain Marseille) (Minibacterium massiliensis).